Here is a 193-residue protein sequence, read N- to C-terminus: 2',3'-cyclic-nucleotide 3'-phosphodiesterase (193 aa).

His40 functions as the Proton donor/acceptor in the catalytic mechanism. Position 42 (Thr42) interacts with substrate. His129 acts as the Proton donor/acceptor in catalysis. 2 residues coordinate substrate: Ser131 and Tyr134.

It belongs to the 2H phosphoesterase superfamily. CPD1 family.

It is found in the golgi apparatus. The catalysed reaction is a nucleoside 2',3'-cyclic phosphate + H2O = a nucleoside 2'-phosphate + H(+). Involved in the metabolism of ADP-ribose 1',2'-cyclic phosphate which is produced as a consequence of tRNA splicing. This chain is 2',3'-cyclic-nucleotide 3'-phosphodiesterase (CPD1), found in Phaeosphaeria nodorum (strain SN15 / ATCC MYA-4574 / FGSC 10173) (Glume blotch fungus).